Consider the following 274-residue polypeptide: 2,3,4,5-tetrahydropyridine-2,6-dicarboxylate N-succinyltransferase (274 aa).

This sequence belongs to the transferase hexapeptide repeat family.

The protein localises to the cytoplasm. The enzyme catalyses (S)-2,3,4,5-tetrahydrodipicolinate + succinyl-CoA + H2O = (S)-2-succinylamino-6-oxoheptanedioate + CoA. It participates in amino-acid biosynthesis; L-lysine biosynthesis via DAP pathway; LL-2,6-diaminopimelate from (S)-tetrahydrodipicolinate (succinylase route): step 1/3. In Leptothrix cholodnii (strain ATCC 51168 / LMG 8142 / SP-6) (Leptothrix discophora (strain SP-6)), this protein is 2,3,4,5-tetrahydropyridine-2,6-dicarboxylate N-succinyltransferase.